Here is a 283-residue protein sequence, read N- to C-terminus: MNCNYNCVTLHNSVRMPQLGLGVWRAQDGAETANAVRWAIEAGYRHIDTAYIYSNERGVGQGIRESGVPREEVWVTTKVWNSDQGYEKTLAAFERSRELLGLEYIDLYLIHWPGKKKFVDTWKALEKLYEEKKVRAIGVSNFEPHHLTELFKSCKIRPMVNQVELHPLFQQRTLREFCKQHNIAITAWSPLGSGEEAGILKNHVLGEIAKKHNKSPAQVVIRWDIQHGIVTIPKSTNKGRIQENFNVWDFKLTEEEMRQIDELNEDKRIGGDPDNFFPGGEEA.

NADP(+)-binding positions include 23–24 and Asp48; that span reads VW. Tyr53 acts as the Proton donor in catalysis. His111 provides a ligand contact to substrate. NADP(+) contacts are provided by residues 140–141, Gln162, 188–193, 234–236, and 240–244; these read SN, WSPLGS, KST, and RIQEN. The tract at residues 264 to 283 is disordered; the sequence is NEDKRIGGDPDNFFPGGEEA.

It belongs to the aldo/keto reductase family. Monomer.

Its subcellular location is the cytoplasm. The enzyme catalyses prostaglandin F2alpha + NADP(+) = prostaglandin H2 + NADPH + H(+). It functions in the pathway lipid metabolism; prostaglandin biosynthesis. Its function is as follows. Catalyzes the NADP-dependent formation of prostaglandin F2-alpha from prostaglandin H2. Also has aldo/ketoreductase activity towards the synthetic substrates 9,10-phenanthrenequinone and p-nitrobenzaldehyde. This is 9,11-endoperoxide prostaglandin H2 reductase from Trypanosoma cruzi (strain CL Brener).